A 224-amino-acid polypeptide reads, in one-letter code: Small ribosomal subunit protein uS3 (224 aa).

Positions 38–106 (LREFVKEKLG…EVYLNVVEVR (69 aa)) constitute a KH type-2 domain.

Belongs to the universal ribosomal protein uS3 family. As to quaternary structure, part of the 30S ribosomal subunit. Forms a tight complex with proteins S10 and S14.

Functionally, binds the lower part of the 30S subunit head. Binds mRNA in the 70S ribosome, positioning it for translation. This chain is Small ribosomal subunit protein uS3, found in Anaeromyxobacter dehalogenans (strain 2CP-C).